A 56-amino-acid polypeptide reads, in one-letter code: uncharacterized protein (56 aa).

2 consecutive 4Fe-4S ferredoxin-type domains span residues 2-28 (VKID…NLIE) and 29-56 (HIIV…LEGE). [4Fe-4S] cluster is bound by residues Cys9, Cys12, Cys15, Cys19, Cys38, Cys41, Cys44, and Cys48.

The cofactor is [4Fe-4S] cluster.

Functionally, ferredoxins are iron-sulfur proteins that transfer electrons in a wide variety of metabolic reactions. This is an uncharacterized protein from Methanocaldococcus jannaschii (strain ATCC 43067 / DSM 2661 / JAL-1 / JCM 10045 / NBRC 100440) (Methanococcus jannaschii).